We begin with the raw amino-acid sequence, 660 residues long: Bifunctional polymyxin resistance protein ArnA (660 aa).

The tract at residues 1–304 is formyltransferase ArnAFT; that stretch reads MKAVVFAYHD…TLGLVAGARL (304 aa). The active-site Proton donor; for formyltransferase activity is the H104. Residues R114 and 136 to 140 contribute to the (6R)-10-formyltetrahydrofolate site; that span reads VKRAD. Residues 314 to 660 are dehydrogenase ArnADH; it reads RRTRVLILGV…QSVEPGDAEE (347 aa). NAD(+) contacts are provided by residues D347 and 368-369; that span reads DI. Residues A393, Y398, and 432-433 each bind UDP-alpha-D-glucuronate; that span reads TS. The active-site Proton acceptor; for decarboxylase activity is E434. UDP-alpha-D-glucuronate is bound by residues R460, N492, 526 to 535, and Y613; that span reads KLIDGGRQKR. R619 (proton donor; for decarboxylase activity) is an active-site residue.

This sequence in the N-terminal section; belongs to the Fmt family. UDP-L-Ara4N formyltransferase subfamily. It in the C-terminal section; belongs to the NAD(P)-dependent epimerase/dehydratase family. UDP-glucuronic acid decarboxylase subfamily. As to quaternary structure, homohexamer, formed by a dimer of trimers.

The enzyme catalyses UDP-alpha-D-glucuronate + NAD(+) = UDP-beta-L-threo-pentopyranos-4-ulose + CO2 + NADH. The catalysed reaction is UDP-4-amino-4-deoxy-beta-L-arabinose + (6R)-10-formyltetrahydrofolate = UDP-4-deoxy-4-formamido-beta-L-arabinose + (6S)-5,6,7,8-tetrahydrofolate + H(+). It participates in nucleotide-sugar biosynthesis; UDP-4-deoxy-4-formamido-beta-L-arabinose biosynthesis; UDP-4-deoxy-4-formamido-beta-L-arabinose from UDP-alpha-D-glucuronate: step 1/3. It functions in the pathway nucleotide-sugar biosynthesis; UDP-4-deoxy-4-formamido-beta-L-arabinose biosynthesis; UDP-4-deoxy-4-formamido-beta-L-arabinose from UDP-alpha-D-glucuronate: step 3/3. The protein operates within bacterial outer membrane biogenesis; lipopolysaccharide biosynthesis. In terms of biological role, bifunctional enzyme that catalyzes the oxidative decarboxylation of UDP-glucuronic acid (UDP-GlcUA) to UDP-4-keto-arabinose (UDP-Ara4O) and the addition of a formyl group to UDP-4-amino-4-deoxy-L-arabinose (UDP-L-Ara4N) to form UDP-L-4-formamido-arabinose (UDP-L-Ara4FN). The modified arabinose is attached to lipid A and is required for resistance to polymyxin and cationic antimicrobial peptides. The sequence is that of Bifunctional polymyxin resistance protein ArnA from Erwinia tasmaniensis (strain DSM 17950 / CFBP 7177 / CIP 109463 / NCPPB 4357 / Et1/99).